The chain runs to 171 residues: UPF0312 protein SAB2563 (171 aa).

This sequence belongs to the UPF0312 family.

This chain is UPF0312 protein SAB2563, found in Staphylococcus aureus (strain bovine RF122 / ET3-1).